Consider the following 933-residue polypeptide: Exosome complex exonuclease RRP44 homolog A (933 aa).

The 114-residue stretch at 50–163 folds into the PINc domain; it reads KIIVVDTNVV…LVTNDRENKR (114 aa). The 105-residue stretch at 217 to 321 folds into the CSD1 domain; it reads QEHKPMSEIT…NVDDAPRTSN (105 aa). The disordered stretch occupies residues 296-336; that stretch reads AEEDDEEDDTVHLAPDNVDDAPRTSNLSHETSGDKNAAPVR. The region spanning 371 to 438 is the CSD2 domain; it reads ALFVSKDRRI…ETEVVLIEND (68 aa). An RNB domain is found at 469-798; that stretch reads RQDLRHLLVF…FVHRLLAASL (330 aa). Mg(2+) contacts are provided by D481 and D490.

This sequence belongs to the RNR ribonuclease family. In terms of assembly, probable component of the RNA exosome complex. The cofactor is Mg(2+).

It localises to the nucleus. Its function is as follows. Catalytic component of the RNA exosome complex which has 3'-&gt;5' exoribonuclease activity and participates in a multitude of cellular RNA processing and degradation events. Required for 5.8S rRNA intermediate processing and the degradation of 5' external transcribed spacer (5' ETS), a maturation by-product of rRNA synthesis. Is not involved in the degradation of turnip crinkle virus (TCV) RNA and significant virus resistance. Required for normal development of female gametophytes and early embryogenesis. The protein is Exosome complex exonuclease RRP44 homolog A of Arabidopsis thaliana (Mouse-ear cress).